Consider the following 359-residue polypeptide: Peptide chain release factor 1 (359 aa).

Gln-235 is subject to N5-methylglutamine. The tract at residues 283–309 (QKAESERSQARRSQVGSGDRSERIRTY) is disordered.

This sequence belongs to the prokaryotic/mitochondrial release factor family. Methylated by PrmC. Methylation increases the termination efficiency of RF1.

It localises to the cytoplasm. Functionally, peptide chain release factor 1 directs the termination of translation in response to the peptide chain termination codons UAG and UAA. The sequence is that of Peptide chain release factor 1 from Brucella suis (strain ATCC 23445 / NCTC 10510).